Consider the following 428-residue polypeptide: Ribosomal RNA small subunit methyltransferase B (428 aa).

S-adenosyl-L-methionine contacts are provided by residues 253–259, D276, D302, and D321; that span reads CAAPGGK. The active-site Nucleophile is C374.

This sequence belongs to the class I-like SAM-binding methyltransferase superfamily. RsmB/NOP family.

Its subcellular location is the cytoplasm. The enzyme catalyses cytidine(967) in 16S rRNA + S-adenosyl-L-methionine = 5-methylcytidine(967) in 16S rRNA + S-adenosyl-L-homocysteine + H(+). Specifically methylates the cytosine at position 967 (m5C967) of 16S rRNA. This is Ribosomal RNA small subunit methyltransferase B from Enterobacter sp. (strain 638).